The following is a 225-amino-acid chain: Agamous-like MADS-box protein TM6 (225 aa).

Residues 1–61 (MGRGKIEIKR…GKFHEYTSPT (61 aa)) enclose the MADS-box domain. One can recognise a K-box domain in the interval 84 to 174 (YERMQENLRK…LLNFEAKCDD (91 aa)).

Expressed during flower development in stamens, petals and carpels. Expressed in fruits and seeds.

It is found in the nucleus. Its function is as follows. Probable transcription factor involved in flower development. The sequence is that of Agamous-like MADS-box protein TM6 from Vitis vinifera (Grape).